A 358-amino-acid polypeptide reads, in one-letter code: DnaJ homolog subfamily B member 11 (358 aa).

Residues M1–A22 form the signal peptide. One can recognise a J domain in the interval D25–G90. Position 188 is a phosphothreonine (T188). Residue N261 is glycosylated (N-linked (GlcNAc...) asparagine).

Part of a large chaperone multiprotein complex comprising DNAJB11, HSP90B1, HSPA5, HYOU, PDIA2, PDIA4, PDIA6, PPIB, SDF2L1, UGGT1 and very small amounts of ERP29, but not, or at very low levels, CALR nor CANX. Binds to denatured substrates in an ATP-independent manner. Interacts via the J domain with HSPA5 in an ATP-dependent manner. In terms of processing, contains high-mannose Endo H-sensitive carbohydrates. Cys-169, Cys-171, Cys-193 and Cys-196 form intramolecular disulfide bonds. The preferential partner for each Cys is not known.

Its subcellular location is the endoplasmic reticulum lumen. In terms of biological role, as a co-chaperone for HSPA5 it is required for proper folding, trafficking or degradation of proteins. Binds directly to both unfolded proteins that are substrates for ERAD and nascent unfolded peptide chains, but dissociates from the HSPA5-unfolded protein complex before folding is completed. May help recruiting HSPA5 and other chaperones to the substrate. Stimulates HSPA5 ATPase activity. It is necessary for maturation and correct trafficking of PKD1. The polypeptide is DnaJ homolog subfamily B member 11 (Dnajb11) (Mus musculus (Mouse)).